A 1588-amino-acid polypeptide reads, in one-letter code: Paternally-expressed gene 3 protein (1588 aa).

In terms of domain architecture, SCAN box spans 46 to 128 (HQRFRNLIYV…TLLENYKEMY (83 aa)). 3 disordered regions span residues 128 to 231 (YQPE…YQNV), 265 to 304 (GHSH…RRGI), and 317 to 347 (KFIK…MSDD). Residues 129–142 (QPEDDNNSDVTSDD) are compositionally biased toward acidic residues. Composition is skewed to basic and acidic residues over residues 143-152 (DMTRNRRESS), 160-181 (FSDR…DRWS), 205-224 (FEMD…RSQD), and 293-304 (PEAKKSTHRRGI). C2H2-type zinc fingers lie at residues 452 to 474 (YVCD…QIMH), 505 to 527 (FECK…RKIH), and 563 to 585 (YECR…QKIH). A compositionally biased stretch (basic and acidic residues) spans 588–607 (DDKDNEREHERERERERGET). Residues 588–608 (DDKDNEREHERERERERGETF) are disordered. The segment at 627-649 (YECKVCGETFLHSSSLKEHQKIH) adopts a C2H2-type 4 zinc-finger fold. Disordered stretches follow at residues 839–889 (VASK…SKNR) and 905–929 (QKSV…SSNV). The segment covering 868 to 881 (LNDKRQKIPARENP) has biased composition (basic and acidic residues). Residues 969–991 (YECQECGECFAHSSDLTEHQKIH) form a C2H2-type 5 zinc finger. Residues 1056-1104 (EKSHGEESQGENTDGEETHSEETHGQETIEDPVIQGSDMEDPQKDDPDD) are disordered. The segment covering 1071–1082 (EETHSEETHGQE) has biased composition (basic and acidic residues). 5 consecutive C2H2-type zinc fingers follow at residues 1107-1129 (YECE…QKVH), 1163-1185 (YECP…QRIH), 1225-1247 (IRCL…MRLH), 1282-1304 (FECA…VTVH), and 1332-1354 (YECK…KELH). Positions 1396-1415 (EPEVEAAEPEVEAAEPEVEA) are enriched in acidic residues. The tract at residues 1396–1495 (EPEVEAAEPE…GIEDPEEGED (100 aa)) is disordered. Tandem repeats lie at residues 1397 to 1403 (PEVEAAE), 1404 to 1410 (PEVEAAE), 1411 to 1417 (PEVEAAE), 1418 to 1422 (PNGEA), 1425 to 1429 (PDGEA), 1432 to 1436 (PIGEA), and 1439 to 1443 (PNGEA). Residues 1397-1417 (PEVEAAEPEVEAAEPEVEAAE) form a 3 X 7 AA repeat of P-E-V-E-A-A-E region. Positions 1418 to 1443 (PNGEAEGPDGEAAEPIGEAGQPNGEA) are 4 X 5 AA repeat of P-X-G-E-A. Acidic residues-rich tracts occupy residues 1449 to 1466 (DADE…ERAE) and 1475 to 1495 (PEGD…EGED). 2 consecutive C2H2-type zinc fingers follow at residues 1505-1527 (YDCH…LKTH) and 1564-1586 (FKCD…QNTH).

It belongs to the krueppel C2H2-type zinc-finger protein family. In terms of assembly, homodimer. Interacts with SIAH1A and SIAH2. Interacts with TRAF2. As to expression, brain, glial cells, astrocytes, embryo, placenta, testis, ovary and uterus. In the placenta it is found in the layer of villous cytotrophoblast cells while in the ovary it is found in the cells of the ovarian stroma including the thecal layers around the follicles. Expression is highly repressed in glioma cell lines.

The protein localises to the nucleus. It localises to the cytoplasm. Functionally, induces apoptosis in cooperation with SIAH1A. Acts as a mediator between p53/TP53 and BAX in a neuronal death pathway that is activated by DNA damage. Acts synergistically with TRAF2 and inhibits TNF induced apoptosis through activation of NF-kappa-B. Possesses a tumor suppressing activity in glioma cells. The polypeptide is Paternally-expressed gene 3 protein (PEG3) (Homo sapiens (Human)).